Here is a 580-residue protein sequence, read N- to C-terminus: YTH domain-containing family protein 2 (580 aa).

A disordered region spans residues 1 to 45 (MSASSLLEQRPKGQGNKVQNGSVHQKDGLNDDDFEPYLSPQARPN). At S2 the chain carries N-acetylserine. S2, S4, S5, S22, S39, and S196 each carry phosphoserine. The segment at 2–385 (SASSLLEQRP…QAGSGSTPSE (384 aa)) is localization to mRNA processing bodies (P-bodies). The disordered stretch occupies residues 247–388 (AKQQPKLKTK…SGSTPSEPHP (142 aa)). Residues 291 to 317 (ALVQNIGQQPTQGSPQPVGQQANNSPP) are compositionally biased toward polar residues. Over residues 338–350 (AQLSVQQQAAQPT) the composition is skewed to low complexity. Phosphoserine is present on S360. Gly residues predominate over residues 360–372 (SGFGHNGVDGNGV). Positions 373–384 (GQTQAGSGSTPS) are enriched in polar residues. Residues 386 to 580 (PHPVLEKLRS…VKKERQGRGK (195 aa)) form an interaction with m6A-containing mRNAs region. S395 carries the post-translational modification Phosphoserine. The YTH domain maps to 411–545 (GRVFIIKSYS…EKAKQVLKII (135 aa)). RNA contacts are provided by residues 417-419 (KSY), D423, 433-434 (WC), N463, W487, and W492.

Belongs to the YTHDF family. YTHDF2 subfamily. In terms of assembly, interacts with CNOT1; interaction is direct and promotes recruitment of the CCR4-NOT complex. Interacts with YTHDF3. Interacts with RIDA/HRSP12; interaction leads to recruitment of the ribonuclease P/MRP complex. In terms of processing, ubiquitinated by the SCF(SKP2) complex, leading to its degradation.

Its subcellular location is the cytoplasm. It is found in the cytosol. It localises to the P-body. The protein localises to the stress granule. The protein resides in the nucleus. Its function is as follows. Specifically recognizes and binds N6-methyladenosine (m6A)-containing RNAs, and regulates their stability. M6A is a modification present at internal sites of mRNAs and some non-coding RNAs and plays a role in mRNA stability and processing. Acts as a regulator of mRNA stability by promoting degradation of m6A-containing mRNAs via interaction with the CCR4-NOT and ribonuclease P/MRP complexes, depending on the context. The YTHDF paralogs (YTHDF1, YTHDF2 and YTHDF3) share m6A-containing mRNAs targets and act redundantly to mediate mRNA degradation and cellular differentiation. M6A-containing mRNAs containing a binding site for RIDA/HRSP12 (5'-GGUUC-3') are preferentially degraded by endoribonucleolytic cleavage: cooperative binding of RIDA/HRSP12 and YTHDF2 to transcripts leads to recruitment of the ribonuclease P/MRP complex. Other m6A-containing mRNAs undergo deadenylation via direct interaction between YTHDF2 and CNOT1, leading to recruitment of the CCR4-NOT and subsequent deadenylation of m6A-containing mRNAs. Required maternally to regulate oocyte maturation: probably acts by binding to m6A-containing mRNAs, thereby regulating maternal transcript dosage during oocyte maturation, which is essential for the competence of oocytes to sustain early zygotic development. Also required during spermatogenesis: regulates spermagonial adhesion by promoting degradation of m6A-containing transcripts coding for matrix metallopeptidases. Also involved in hematopoietic stem cells specification by binding to m6A-containing mRNAs, leading to promote their degradation. Also acts as a regulator of neural development by promoting m6A-dependent degradation of neural development-related mRNA targets. Inhibits neural specification of induced pluripotent stem cells by binding to methylated neural-specific mRNAs and promoting their degradation, thereby restraining neural differentiation. Regulates circadian regulation of hepatic lipid metabolism: acts by promoting m6A-dependent degradation of PPARA transcripts. Regulates the innate immune response to infection by inhibiting the type I interferon response: acts by binding to m6A-containing IFNB transcripts and promoting their degradation. May also act as a promoter of cap-independent mRNA translation following heat shock stress: upon stress, relocalizes to the nucleus and specifically binds mRNAs with some m6A methylation mark at their 5'-UTR, protecting demethylation of mRNAs by FTO, thereby promoting cap-independent mRNA translation. Regulates mitotic entry by promoting the phase-specific m6A-dependent degradation of WEE1 transcripts. Promotes formation of phase-separated membraneless compartments, such as P-bodies or stress granules, by undergoing liquid-liquid phase separation upon binding to mRNAs containing multiple m6A-modified residues: polymethylated mRNAs act as a multivalent scaffold for the binding of YTHDF proteins, juxtaposing their disordered regions and thereby leading to phase separation. The resulting mRNA-YTHDF complexes then partition into different endogenous phase-separated membraneless compartments, such as P-bodies, stress granules or neuronal RNA granules. May also recognize and bind RNAs modified by C5-methylcytosine (m5C) and act as a regulator of rRNA processing. This is YTH domain-containing family protein 2 from Bos taurus (Bovine).